We begin with the raw amino-acid sequence, 325 residues long: Pyruvate dehydrogenase E1 component subunit beta (325 aa).

Residue Glu-59 coordinates thiamine diphosphate.

As to quaternary structure, heterodimer of an alpha and a beta chain. The cofactor is thiamine diphosphate.

The catalysed reaction is N(6)-[(R)-lipoyl]-L-lysyl-[protein] + pyruvate + H(+) = N(6)-[(R)-S(8)-acetyldihydrolipoyl]-L-lysyl-[protein] + CO2. In terms of biological role, the pyruvate dehydrogenase complex catalyzes the overall conversion of pyruvate to acetyl-CoA and CO(2). It contains multiple copies of three enzymatic components: pyruvate dehydrogenase (E1), dihydrolipoamide acetyltransferase (E2) and lipoamide dehydrogenase (E3). The sequence is that of Pyruvate dehydrogenase E1 component subunit beta (pdhB) from Rickettsia bellii (strain RML369-C).